A 1011-amino-acid polypeptide reads, in one-letter code: Cell division cycle-associated protein 2 (1011 aa).

Residues 1-22 are compositionally biased toward polar residues; the sequence is MDTCSQESEPLQTKESPINNAG. The segment at 1–26 is disordered; that stretch reads MDTCSQESEPLQTKESPINNAGKTPL. Phosphoserine is present on residues Ser125, Ser130, Ser209, Ser293, and Ser310. Thr313 is modified (phosphothreonine). The 61-residue stretch at 380-440 folds into the PP1-binding domain; that stretch reads KRKRVTFGED…PEWLPQPNFD (61 aa). Phosphoserine is present on residues Ser391 and Ser398. 2 disordered regions span residues 395–438 and 522–544; these read LDES…PQPN and PCKEKKTNRRKSQESKHADKVLP. Thr403 bears the Phosphothreonine mark. Low complexity predominate over residues 418–431; sequence SSLSPPLLEQSPVP. The residue at position 428 (Ser428) is a Phosphoserine. The segment covering 522-543 has biased composition (basic and acidic residues); that stretch reads PCKEKKTNRRKSQESKHADKVL. Phosphoserine occurs at positions 583, 702, and 747. Lys753 is covalently cross-linked (Glycyl lysine isopeptide (Lys-Gly) (interchain with G-Cter in SUMO2)). Over residues 790-803 the composition is skewed to basic and acidic residues; sequence DQRKVSKSQGEDLG. Disordered stretches follow at residues 790–835 and 896–1011; these read DQRK…GLHL and GLVW…LSEN. Residues 931-945 are compositionally biased toward polar residues; that stretch reads SSRQDPCTLPSTSSE. Phosphoserine is present on Ser967. Residues 968-983 show a composition bias toward polar residues; sequence FCTSTLANPKSTTQSR. The span at 993–1011 shows a compositional bias: basic and acidic residues; sequence QKRENTLQETSRESDLSEN.

As to quaternary structure, interacts with PPP1CC. In terms of processing, phosphorylated by CDK1. May regulate its subcellular location.

The protein localises to the nucleus. Its function is as follows. Regulator of chromosome structure during mitosis required for condensin-depleted chromosomes to retain their compact architecture through anaphase. Acts by mediating the recruitment of phopsphatase PP1-gamma subunit (PPP1CC) to chromatin at anaphase and into the following interphase. At anaphase onset, its association with chromatin targets a pool of PPP1CC to dephosphorylate substrates. In Bos taurus (Bovine), this protein is Cell division cycle-associated protein 2 (CDCA2).